Consider the following 115-residue polypeptide: Large ribosomal subunit protein bL19 (115 aa).

This sequence belongs to the bacterial ribosomal protein bL19 family.

Functionally, this protein is located at the 30S-50S ribosomal subunit interface and may play a role in the structure and function of the aminoacyl-tRNA binding site. The polypeptide is Large ribosomal subunit protein bL19 (Desulforamulus reducens (strain ATCC BAA-1160 / DSM 100696 / MI-1) (Desulfotomaculum reducens)).